We begin with the raw amino-acid sequence, 245 residues long: DNA polymerase sliding clamp (245 aa).

Belongs to the PCNA family. In terms of assembly, homotrimer. The subunits circularize to form a toroid; DNA passes through its center. Replication factor C (RFC) is required to load the toroid on the DNA.

Sliding clamp subunit that acts as a moving platform for DNA processing. Responsible for tethering the catalytic subunit of DNA polymerase and other proteins to DNA during high-speed replication. This Picrophilus torridus (strain ATCC 700027 / DSM 9790 / JCM 10055 / NBRC 100828 / KAW 2/3) protein is DNA polymerase sliding clamp.